The sequence spans 1394 residues: DNA-directed RNA polymerase subunit beta' (1394 aa).

Positions 70, 72, 85, and 88 each coordinate Zn(2+). Positions 470, 472, and 474 each coordinate Mg(2+). The Zn(2+) site is built by C815, C889, C896, and C899.

It belongs to the RNA polymerase beta' chain family. In terms of assembly, the RNAP catalytic core consists of 2 alpha, 1 beta, 1 beta' and 1 omega subunit. When a sigma factor is associated with the core the holoenzyme is formed, which can initiate transcription. Requires Mg(2+) as cofactor. Zn(2+) serves as cofactor.

It carries out the reaction RNA(n) + a ribonucleoside 5'-triphosphate = RNA(n+1) + diphosphate. DNA-dependent RNA polymerase catalyzes the transcription of DNA into RNA using the four ribonucleoside triphosphates as substrates. This is DNA-directed RNA polymerase subunit beta' from Anaeromyxobacter dehalogenans (strain 2CP-C).